Consider the following 114-residue polypeptide: Large ribosomal subunit protein bL19 (114 aa).

The protein belongs to the bacterial ribosomal protein bL19 family.

Functionally, this protein is located at the 30S-50S ribosomal subunit interface and may play a role in the structure and function of the aminoacyl-tRNA binding site. This Acetivibrio thermocellus (strain ATCC 27405 / DSM 1237 / JCM 9322 / NBRC 103400 / NCIMB 10682 / NRRL B-4536 / VPI 7372) (Clostridium thermocellum) protein is Large ribosomal subunit protein bL19.